Here is a 138-residue protein sequence, read N- to C-terminus: ATP synthase epsilon chain (138 aa).

Belongs to the ATPase epsilon chain family. As to quaternary structure, F-type ATPases have 2 components, CF(1) - the catalytic core - and CF(0) - the membrane proton channel. CF(1) has five subunits: alpha(3), beta(3), gamma(1), delta(1), epsilon(1). CF(0) has three main subunits: a, b and c.

It is found in the cell inner membrane. Produces ATP from ADP in the presence of a proton gradient across the membrane. The protein is ATP synthase epsilon chain of Geobacter sp. (strain M21).